A 198-amino-acid polypeptide reads, in one-letter code: Recombination protein RecR (198 aa).

The segment at Cys-57–Cys-72 adopts a C4-type zinc-finger fold. The Toprim domain maps to Ser-80–Pro-175.

It belongs to the RecR family.

In terms of biological role, may play a role in DNA repair. It seems to be involved in an RecBC-independent recombinational process of DNA repair. It may act with RecF and RecO. The chain is Recombination protein RecR from Bacillus velezensis (strain DSM 23117 / BGSC 10A6 / LMG 26770 / FZB42) (Bacillus amyloliquefaciens subsp. plantarum).